A 406-amino-acid polypeptide reads, in one-letter code: uncharacterized protein (406 aa).

The protein localises to the plastid. It localises to the chloroplast. This is an uncharacterized protein from Euglena gracilis.